Consider the following 405-residue polypeptide: Saccharopepsin (405 aa).

Positions 1-22 (MFSLKALLPLALLLVSANQVAA) are cleaved as a signal peptide. The propeptide at 23–76 (KVHKAKIYKHELSDEMKEVTFEQHLAHLGQKYLTQFEKANPEVVFSREHPFFTE) is activation peptide. The Peptidase A1 domain maps to 91-402 (YYTDITLGTP…DLGNNAVGLA (312 aa)). D109 is an active-site residue. An intrachain disulfide couples C122 to C127. N144 carries an N-linked (GlcNAc...) asparagine glycan. D294 is an active-site residue. Residues C328 and C361 are joined by a disulfide bond. N-linked (GlcNAc...) asparagine glycosylation occurs at N345.

The protein belongs to the peptidase A1 family.

The protein resides in the vacuole. It carries out the reaction Hydrolysis of proteins with broad specificity for peptide bonds. Cleaves -Leu-Leu-|-Val-Tyr- bond in a synthetic substrate. Does not act on esters of Tyr or Arg.. Aspartyl protease implicated in the post-translational regulation of S.cerevisiae vacuolar proteinases. Acts on YSCB, on YSCY and on itself. The protein is Saccharopepsin (PEP4) of Saccharomyces cerevisiae (strain ATCC 204508 / S288c) (Baker's yeast).